Consider the following 376-residue polypeptide: Tetraacyldisaccharide 4'-kinase (376 aa).

An ATP-binding site is contributed by 51 to 58; the sequence is AVGGTGKT.

Belongs to the LpxK family.

The enzyme catalyses a lipid A disaccharide + ATP = a lipid IVA + ADP + H(+). It functions in the pathway glycolipid biosynthesis; lipid IV(A) biosynthesis; lipid IV(A) from (3R)-3-hydroxytetradecanoyl-[acyl-carrier-protein] and UDP-N-acetyl-alpha-D-glucosamine: step 6/6. Transfers the gamma-phosphate of ATP to the 4'-position of a tetraacyldisaccharide 1-phosphate intermediate (termed DS-1-P) to form tetraacyldisaccharide 1,4'-bis-phosphate (lipid IVA). This Bacteroides fragilis (strain ATCC 25285 / DSM 2151 / CCUG 4856 / JCM 11019 / LMG 10263 / NCTC 9343 / Onslow / VPI 2553 / EN-2) protein is Tetraacyldisaccharide 4'-kinase.